The chain runs to 428 residues: Serine--tRNA ligase (428 aa).

Residue 235-237 participates in L-serine binding; the sequence is TAE. An ATP-binding site is contributed by 266-268; the sequence is RYE. Residue Glu289 participates in L-serine binding. 353-356 lines the ATP pocket; sequence EVSS. Ser389 is a binding site for L-serine.

This sequence belongs to the class-II aminoacyl-tRNA synthetase family. Type-1 seryl-tRNA synthetase subfamily. Homodimer. The tRNA molecule binds across the dimer.

The protein localises to the cytoplasm. It catalyses the reaction tRNA(Ser) + L-serine + ATP = L-seryl-tRNA(Ser) + AMP + diphosphate + H(+). The catalysed reaction is tRNA(Sec) + L-serine + ATP = L-seryl-tRNA(Sec) + AMP + diphosphate + H(+). It participates in aminoacyl-tRNA biosynthesis; selenocysteinyl-tRNA(Sec) biosynthesis; L-seryl-tRNA(Sec) from L-serine and tRNA(Sec): step 1/1. Its function is as follows. Catalyzes the attachment of serine to tRNA(Ser). Is also able to aminoacylate tRNA(Sec) with serine, to form the misacylated tRNA L-seryl-tRNA(Sec), which will be further converted into selenocysteinyl-tRNA(Sec). The polypeptide is Serine--tRNA ligase (Blochmanniella pennsylvanica (strain BPEN)).